Consider the following 391-residue polypeptide: Ribosomal RNA small subunit methyltransferase H (391 aa).

Positions 1-23 (MDVDVQDDVQGRAGEGAEERAHD) are disordered. S-adenosyl-L-methionine is bound by residues 59 to 61 (GGH), Asp-78, Leu-112, Asp-126, and Gln-133. Residues 284–391 (SSSSAPPDLP…EPGATVERTP (108 aa)) are disordered. The span at 368 to 380 (RTQEFETHPHLEP) shows a compositional bias: basic and acidic residues.

This sequence belongs to the methyltransferase superfamily. RsmH family.

It is found in the cytoplasm. It carries out the reaction cytidine(1402) in 16S rRNA + S-adenosyl-L-methionine = N(4)-methylcytidine(1402) in 16S rRNA + S-adenosyl-L-homocysteine + H(+). In terms of biological role, specifically methylates the N4 position of cytidine in position 1402 (C1402) of 16S rRNA. This chain is Ribosomal RNA small subunit methyltransferase H, found in Kineococcus radiotolerans (strain ATCC BAA-149 / DSM 14245 / SRS30216).